The following is a 451-amino-acid chain: GTPase Der (451 aa).

EngA-type G domains are found at residues 5–170 and 186–359; these read PVVA…VEPE and IKLA…AAAF. GTP is bound by residues 11 to 18, 58 to 62, 122 to 125, 192 to 199, 239 to 243, and 304 to 307; these read GRPNVGKS, DTGGF, NKAE, DTAGL, and NKWD. The 85-residue stretch at 360–444 folds into the KH-like domain; sequence AKLSTPKLTR…PLRIEFKSSR (85 aa).

The protein belongs to the TRAFAC class TrmE-Era-EngA-EngB-Septin-like GTPase superfamily. EngA (Der) GTPase family. Associates with the 50S ribosomal subunit.

GTPase that plays an essential role in the late steps of ribosome biogenesis. The polypeptide is GTPase Der (Bordetella petrii (strain ATCC BAA-461 / DSM 12804 / CCUG 43448)).